A 1935-amino-acid chain; its full sequence is Myosin-7 (1935 aa).

Residues 32–81 (DLKKDVYVPDDKEEFVKAKILSREGGKVTAETEHGKTVTVKEDQVLQQNP) enclose the Myosin N-terminal SH3-like domain. In terms of domain architecture, Myosin motor spans 85 to 778 (DKIEDMAMLT…LLGLLEEMRD (694 aa)). Lys129 is modified (N6,N6,N6-trimethyllysine). 178-185 (GESGAGKT) serves as a coordination point for ATP. A Phosphothreonine modification is found at Thr378. Actin-binding stretches follow at residues 655–677 (LNKL…IPNE) and 757–771 (KFGH…GLLG). An IQ domain is found at 781-810 (LSRIITRIQAQSRGVLSRMEFKKLLERRDS). Residues 839-1935 (LLKSAETEKE…DIGTKGLNEE (1097 aa)) adopt a coiled-coil conformation. Phosphoserine is present on residues Ser1137 and Ser1269. Thr1282 carries the phosphothreonine modification. Tyr1308 carries the post-translational modification Phosphotyrosine. Thr1309 is modified (phosphothreonine). A Phosphoserine modification is found at Ser1510. The residue at position 1513 (Thr1513) is a Phosphothreonine. Positions 1907 to 1935 (EERADIAESQVNKLRAKSRDIGTKGLNEE) are disordered. Positions 1923-1935 (KSRDIGTKGLNEE) are enriched in basic and acidic residues.

Belongs to the TRAFAC class myosin-kinesin ATPase superfamily. Myosin family. As to quaternary structure, muscle myosin is a hexameric protein that consists of 2 heavy chain subunits (MHC), 2 alkali light chain subunits (MLC) and 2 regulatory light chain subunits (MLC-2). Interacts with ECPAS. Interacts (via C-terminus) with LRRC39.

It is found in the cytoplasm. The protein localises to the myofibril. Its subcellular location is the sarcomere. In terms of biological role, myosins are actin-based motor molecules with ATPase activity essential for muscle contraction. Forms regular bipolar thick filaments that, together with actin thin filaments, constitute the fundamental contractile unit of skeletal and cardiac muscle. This Sus scrofa (Pig) protein is Myosin-7 (MYH7).